We begin with the raw amino-acid sequence, 297 residues long: MDQAAVCLTICRINQLLSPSLLLKWWKADPSMSLTSPVLQTVTRDQIKAAALKNEIEQFYPKLPRVLAAYREQGINTIPISSKQYPFWLKSIYDPPAVLFAKGDMTLLSKGRKIGIVGTRNPTAYGKQVVNHLTKEICRKGWVIVSGLASGIDGMSHAASIKAKGRTIGVIAGGFQHIYPRENLQLADHMAKHHILLSEHPPETKPQKWHFPMRNRIISGLSEGVIVVQGKEKSGSLITAYQALEQGREVFAVPGSLFDPYAGGPIKLIQQGAKAIWSAEDIFEELPERNVQYTEPF.

It belongs to the DprA/Smf family. In terms of assembly, interacts with RecA. Interacts with ComFA and ComFC.

The protein resides in the cytoplasm. Functionally, protein that helps load RecA onto ssDNA during transformation. Binds cooperatively to circular ssDNA, is able to bridge different segments of DNA. Favors the loading of RecA onto SsbA- or SsbB-coated ssDNA and formation of RecA-DNA filaments. RecA-ATP cannot catalyze homologous DNA strand exchange; SsbA and DprA activate strand exchange by RecA-ATP. In Bacillus subtilis (strain 168), this protein is DNA processing protein DprA.